We begin with the raw amino-acid sequence, 440 residues long: MTKTLAEQPGEGAAPVSPSPSRRALLHGAAGLGALAAGAAVAGPGLAFAAPAGLPLPPATPGITPFKIAVPQSALTDLKRRLGATRWPERETVEDWSQGVPLAKLQGLVEYWRTRYDWRRAEATLNRFPNYRTQLDGLGIHFLHARSKHENALPILLTHGWPGSVIEFLKLIPLLTDPTAHGGKAEDAFHVILPSLPGFGFSDKPTQKGWNMARIAKAWAELMQRLGYTHWVAQGGDWGAGVTTALAHLQPAGLAGIHLNFPLVFPEKLPTTDLSPEEQRALAQAQAFNTHGSGYFLLQTTRPQTVGYALADSPSGQAAWIYEKFQGWTDNKGDPESALSQDEMLDNISLYWLTDTAASSARIYWENAGSNFSGGKLDLPVGVSVFPRELFRAPKRWAEQTYSKLIYWNEPDRGGHFAAFEQPALFAHELRECFRQLRAK.

A disordered region spans residues 1 to 21 (MTKTLAEQPGEGAAPVSPSPS). Positions 1-49 (MTKTLAEQPGEGAAPVSPSPSRRALLHGAAGLGALAAGAAVAGPGLAFA) form a signal peptide, tat-type signal.

It belongs to the peptidase S33 family. Predicted to be exported by the Tat system. The position of the signal peptide cleavage has not been experimentally proven.

The enzyme catalyses an epoxide + H2O = an ethanediol. The polypeptide is Putative epoxide hydrolase (Stigmatella aurantiaca (strain DW4/3-1)).